The sequence spans 262 residues: Sepiapterin reductase (262 aa).

M1 is subject to N-acetylmethionine. NADP(+)-binding positions include 15–21 (GASRGFG) and 43–44 (RS). At S46 the chain carries Phosphoserine. 70–71 (DL) is an NADP(+) binding site. Substrate is bound by residues 158-159 (SL) and Y171. K175 is a binding site for NADP(+). Position 196 is a phosphoserine (S196). G200 provides a ligand contact to substrate. NADP(+) is bound at residue 202–207 (LDTDMQ). Position 214 is a phosphoserine (S214). D258 contacts substrate.

This sequence belongs to the sepiapterin reductase family. As to quaternary structure, homodimer.

The protein resides in the cytoplasm. The enzyme catalyses L-erythro-7,8-dihydrobiopterin + NADP(+) = L-sepiapterin + NADPH + H(+). It carries out the reaction (6R)-L-erythro-5,6,7,8-tetrahydrobiopterin + 2 NADP(+) = 6-pyruvoyl-5,6,7,8-tetrahydropterin + 2 NADPH + 2 H(+). It catalyses the reaction (S)-benzoin + NADP(+) = benzil + NADPH + H(+). Catalyzes the final one or two reductions in tetra-hydrobiopterin biosynthesis to form 5,6,7,8-tetrahydrobiopterin. The enzyme also catalyzes the reduction of benzil to (S)-benzoin. In Meriones unguiculatus (Mongolian jird), this protein is Sepiapterin reductase (SPR).